A 175-amino-acid chain; its full sequence is Large ribosomal subunit protein mL67 (175 aa).

This sequence belongs to the mitochondrion-specific ribosomal protein mL67 family. As to quaternary structure, component of the mitochondrial large ribosomal subunit (mt-LSU). Mature yeast 74S mitochondrial ribosomes consist of a small (37S) and a large (54S) subunit. The 37S small subunit contains a 15S ribosomal RNA (15S mt-rRNA) and at least 32 different proteins. The 54S large subunit contains a 21S rRNA (21S mt-rRNA) and at least 45 different proteins.

The protein localises to the mitochondrion. Functionally, component of the mitochondrial ribosome (mitoribosome), a dedicated translation machinery responsible for the synthesis of mitochondrial genome-encoded proteins, including at least some of the essential transmembrane subunits of the mitochondrial respiratory chain. The mitoribosomes are attached to the mitochondrial inner membrane and translation products are cotranslationally integrated into the membrane. mL67/mhr1 also has extraribosomal functions, being involved in regulation of mitochondrial DNA recombination, maintenance and repair, and generation of homoplasmic cells. mL67/mhr1 also acts as transcription factor involved in regulation of RNA polymerase II-dependent transcription. In Schizosaccharomyces pombe (strain 972 / ATCC 24843) (Fission yeast), this protein is Large ribosomal subunit protein mL67 (mhr1).